The chain runs to 259 residues: Phosphatidylserine decarboxylase proenzyme (259 aa).

Active-site charge relay system; for autoendoproteolytic cleavage activity residues include Asp-86, His-142, and Ser-226. Ser-226 (schiff-base intermediate with substrate; via pyruvic acid; for decarboxylase activity) is an active-site residue. Ser-226 is subject to Pyruvic acid (Ser); by autocatalysis.

It belongs to the phosphatidylserine decarboxylase family. PSD-B subfamily. Prokaryotic type I sub-subfamily. As to quaternary structure, heterodimer of a large membrane-associated beta subunit and a small pyruvoyl-containing alpha subunit. It depends on pyruvate as a cofactor. In terms of processing, is synthesized initially as an inactive proenzyme. Formation of the active enzyme involves a self-maturation process in which the active site pyruvoyl group is generated from an internal serine residue via an autocatalytic post-translational modification. Two non-identical subunits are generated from the proenzyme in this reaction, and the pyruvate is formed at the N-terminus of the alpha chain, which is derived from the carboxyl end of the proenzyme. The autoendoproteolytic cleavage occurs by a canonical serine protease mechanism, in which the side chain hydroxyl group of the serine supplies its oxygen atom to form the C-terminus of the beta chain, while the remainder of the serine residue undergoes an oxidative deamination to produce ammonia and the pyruvoyl prosthetic group on the alpha chain. During this reaction, the Ser that is part of the protease active site of the proenzyme becomes the pyruvoyl prosthetic group, which constitutes an essential element of the active site of the mature decarboxylase.

The protein localises to the cell membrane. The catalysed reaction is a 1,2-diacyl-sn-glycero-3-phospho-L-serine + H(+) = a 1,2-diacyl-sn-glycero-3-phosphoethanolamine + CO2. The protein operates within phospholipid metabolism; phosphatidylethanolamine biosynthesis; phosphatidylethanolamine from CDP-diacylglycerol: step 2/2. In terms of biological role, catalyzes the formation of phosphatidylethanolamine (PtdEtn) from phosphatidylserine (PtdSer). This is Phosphatidylserine decarboxylase proenzyme from Geobacillus sp. (strain WCH70).